A 95-amino-acid chain; its full sequence is MATIFIVFVSFGCVFVLGIAAFVLCCLIKKWKCSKAIEKNEMVHVDQHLQVHENILQGPNGMKTVAITVDDDLHVHDEEECVKNEKLGTASTSKA.

Topologically, residues 1–3 (MAT) are extracellular. A helical membrane pass occupies residues 4–24 (IFIVFVSFGCVFVLGIAAFVL). The Cytoplasmic segment spans residues 25-95 (CCLIKKWKCS…KLGTASTSKA (71 aa)).

In terms of assembly, interacts with the secondary cell wall (SCW)-related cellulose synthase complex. Accumulates in cells differentiating into tracheary element (TE) which undergo secondary cell wall (SCW) formation.

It is found in the cell membrane. Its subcellular location is the secreted. The protein resides in the cell wall. Its function is as follows. Involved in the secondary cell wall (SCW) formation of vessel elements (e.g. protoxylem and metaxylem), thus promoting tracheary element (TE) differentiation. This chain is Protein TRACHEARY ELEMENT DIFFERENTIATION-RELATED 6, found in Zinnia elegans (Garden zinnia).